A 119-amino-acid polypeptide reads, in one-letter code: Holo-[acyl-carrier-protein] synthase (119 aa).

Mg(2+)-binding residues include aspartate 8 and glutamate 59.

Belongs to the P-Pant transferase superfamily. AcpS family. Requires Mg(2+) as cofactor.

The protein resides in the cytoplasm. It catalyses the reaction apo-[ACP] + CoA = holo-[ACP] + adenosine 3',5'-bisphosphate + H(+). Its function is as follows. Transfers the 4'-phosphopantetheine moiety from coenzyme A to a Ser of acyl-carrier-protein. The sequence is that of Holo-[acyl-carrier-protein] synthase from Lactococcus lactis subsp. cremoris (strain SK11).